The following is a 185-amino-acid chain: Elongation factor P (185 aa).

The protein belongs to the elongation factor P family.

It localises to the cytoplasm. The protein operates within protein biosynthesis; polypeptide chain elongation. Its function is as follows. Involved in peptide bond synthesis. Stimulates efficient translation and peptide-bond synthesis on native or reconstituted 70S ribosomes in vitro. Probably functions indirectly by altering the affinity of the ribosome for aminoacyl-tRNA, thus increasing their reactivity as acceptors for peptidyl transferase. The protein is Elongation factor P of Bacillus cereus (strain G9842).